Here is a 66-residue protein sequence, read N- to C-terminus: uncharacterized protein (66 aa).

This is an uncharacterized protein from Vertebrata (FPV).